Reading from the N-terminus, the 84-residue chain is Large ribosomal subunit protein bL27 (84 aa).

The disordered stretch occupies residues 1–22 (MAHKKAGGSTRNGRDSESKRLG).

It belongs to the bacterial ribosomal protein bL27 family.

This Shewanella sp. (strain MR-4) protein is Large ribosomal subunit protein bL27.